Consider the following 614-residue polypeptide: Sorting nexin-18 (614 aa).

The region spanning 1 to 61 is the SH3 domain; that stretch reads MALRARALYD…PASYVQVIRA (61 aa). Positions 85 to 218 are disordered; the sequence is GFEPLPAAPP…SQELGHGEPQ (134 aa). Pro residues predominate over residues 90 to 101; that stretch reads PAAPPAAFPPLL. Positions 141-151 are enriched in acidic residues; the sequence is SDDDWDDEWDD. Positions 266–376 constitute a PX domain; that stretch reads FQCTIDDPTK…HFLTCPSSTD (111 aa). A 1,2-diacyl-sn-glycero-3-phospho-(1D-myo-inositol-4,5-bisphosphate) contacts are provided by Arg-302, Lys-304, and Arg-342. Positions 411-614 constitute a BAR domain; that stretch reads LQEVESKIDG…EEALHKYDSV (204 aa).

This sequence belongs to the sorting nexin family. As to quaternary structure, heterodimer with SNX9. Interacts with ITCH. Interacts with dynamin-2 (DNM2), SYNJ1 and WASL. Interacts with the AP-1 complex. Interacts with FCHSD1 (via the F-BAR domain).

The protein resides in the endomembrane system. Its subcellular location is the endosome membrane. It localises to the recycling endosome membrane. The protein localises to the cell membrane. It is found in the cytoplasmic vesicle membrane. Its function is as follows. Involved in endocytosis and intracellular vesicle trafficking, both during interphase and at the end of mitosis. Required for efficient progress through mitosis and cytokinesis. Required for normal formation of the cleavage furrow at the end of mitosis. Plays a role in endocytosis via clathrin-coated pits, but also clathrin-independent, actin-dependent fluid-phase endocytosis. Plays a role in macropinocytosis. Binds to membranes enriched in phosphatidylinositol 4,5-bisphosphate and promotes membrane tubulation. Stimulates the GTPase activity of DNM2. Promotes DNM2 location at the plasma membrane. Together with DNM2, involved in autophagosome assembly by regulating trafficking from recycling endosomes of phospholipid scramblase ATG9A. This Mus musculus (Mouse) protein is Sorting nexin-18.